A 114-amino-acid polypeptide reads, in one-letter code: Large ribosomal subunit protein uL22c (114 aa).

The protein belongs to the universal ribosomal protein uL22 family. Part of the 50S ribosomal subunit.

The protein resides in the plastid. Its subcellular location is the cyanelle. Functionally, this protein binds specifically to 23S rRNA. Its function is as follows. The globular domain of the protein is located near the polypeptide exit tunnel on the outside of the subunit, while an extended beta-hairpin is found that lines the wall of the exit tunnel in the center of the 70S ribosome. In Cyanophora paradoxa, this protein is Large ribosomal subunit protein uL22c (rpl22).